The chain runs to 114 residues: Large ribosomal subunit protein bL19 (114 aa).

It belongs to the bacterial ribosomal protein bL19 family.

This protein is located at the 30S-50S ribosomal subunit interface and may play a role in the structure and function of the aminoacyl-tRNA binding site. The chain is Large ribosomal subunit protein bL19 from Acidithiobacillus ferrooxidans (strain ATCC 23270 / DSM 14882 / CIP 104768 / NCIMB 8455) (Ferrobacillus ferrooxidans (strain ATCC 23270)).